An 804-amino-acid chain; its full sequence is Probable replication endonuclease from prophage-like region 2 (804 aa).

Residues Y503 and Y507 each act as O-(5'-phospho-DNA)-tyrosine intermediate in the active site.

The protein belongs to the phage GPA family.

Possible endonuclease which induces a single-strand cut and initiates DNA replication. This is Probable replication endonuclease from prophage-like region 2 from Salmonella typhi.